The following is a 330-amino-acid chain: Serine/threonine-protein phosphatase PP1-alpha catalytic subunit (330 aa).

N-acetylserine is present on Ser2. Residues Ser2 and Ser22 each carry the phosphoserine modification. Residues Asp64, His66, Asp92, and Asn124 each contribute to the Mn(2+) site. The active-site Proton donor is His125. Residues His173 and His248 each coordinate Mn(2+). Residue Lys305 is modified to N6-acetyllysine. Tyr306 bears the Phosphotyrosine mark. Residues 306 to 330 (YGQFSGLNPGGRPITPPRNSAKAKK) are disordered. The residue at position 320 (Thr320) is a Phosphothreonine. Phosphoserine is present on Ser325.

This sequence belongs to the PPP phosphatase family. PP-1 subfamily. As to quaternary structure, PP1 comprises a catalytic subunit, PPP1CA, PPP1CB or PPP1CC, which is folded into its native form by inhibitor 2 and glycogen synthetase kinase 3, and then complexed to one or several targeting or regulatory subunits. PPP1R12A, PPP1R12B and PPP1R12C mediate binding to myosin. PPP1R3A (in skeletal muscle), PPP1R3B (in liver), PPP1R3C, PPP1R3D and PPP1R3F (in brain) mediate binding to glycogen. Interacts with PPP1R15A and PPP1R15B; the interactions mediate binding to EIF2S1. Part of a complex containing PPP1R15B, PP1 and NCK1/2. Interacts with PPP1R9A, PPP1R9B and PPP1R7. Interacts with YLPM1. Forms a complex with ILF2, ILF3, YLPM1, KHDRBS1, RBMX and NCOA5. Interacts with NOM1 and PPP1R8. Interacts with PPP1R16B. Interacts with RPSA only in the presence of PPP1R16B. Component of the PNUTS-PP1 phosphatase complex, composed of PPP1R10/PNUTS, TOX4, WDR82, and PPP1CA or PPP1CB or PPP1CC. Interacts with PPP1R10/PNUTS and PPP1R8. Interacts with WDR82 in the presence of PPP1R10/PNUTS. Interacts with PPP1R39. transition from mitosis into interphase. Interacts with TRIM28; the interaction dephosphorylates TRIM28 on 'Ser-824' and forms a complex at the p21 promoter site. Interacts with NEK2. Interacts with PHACTR4; which acts as an activator of PP1 activity. Interacts with FER; this promotes phosphorylation at Thr-320. Interacts with BTBD10. Interacts with KCTD20. Interacts with FOXP3. Interacts with CENPA. Interacts with ATG16L1. Found in a complex with PPP1CA, PPP1CC, SHC1 and PEAK1. Interacts with tensin TNS1. Interacts with SAXO4, PPP1R21, PPP1R26, PPP1R27, PPP1R35, PPP1R36, PPP1R37, SH3RF2, ELFN1 and ELFN2. Interacts with TPRN; the interaction results in inhibition of PPC1A phosphatase activity. Interacts with SKA1 (via C-terminus); the interaction is direct and required for the recruitment of PP1 to the kinetochore. Interacts with the KNL1 complex subunit KNL1; the interaction is direct and mutually exclusive with KNL1 binding to microtubules. Component of the SHOC2-MRAS-PP1c (SMP) complex consisting of SHOC2, GTP-bound M-Ras/MRAS and the catalytic subunit of protein phosphatase 1 (either PPP1CA, PPP1CB or PPP1CC). SHOC2 and PP1c preferably bind M-Ras/MRAS, but they also bind K-Ras/KRAS, N-Ras/NRAS and H-Ras/HRAS; these interactions are GTP-dependent and both SHOC2 and PP1c are required to form a stable complex. Interacts with SHOC2 in the absence of Ras GTPases. Mn(2+) is required as a cofactor. In terms of processing, phosphorylated. Dephosphorylated at Thr-320 in the presence of ionizing radiation.

The protein localises to the cytoplasm. Its subcellular location is the nucleus. It is found in the nucleoplasm. It localises to the nucleolus. It carries out the reaction O-phospho-L-seryl-[protein] + H2O = L-seryl-[protein] + phosphate. It catalyses the reaction O-phospho-L-threonyl-[protein] + H2O = L-threonyl-[protein] + phosphate. Functionally, protein phosphatase that associates with over 200 regulatory proteins to form highly specific holoenzymes which dephosphorylate hundreds of biological targets. Protein phosphatase 1 (PP1) is essential for cell division, transcription elongation, and participates in the regulation of glycogen metabolism, muscle contractility and protein synthesis. Involved in regulation of ionic conductances and long-term synaptic plasticity. May play an important role in dephosphorylating substrates such as the postsynaptic density-associated Ca(2+)/calmodulin dependent protein kinase II. Catalytic component of the PNUTS-PP1 protein phosphatase complex, a protein phosphatase 1 (PP1) complex that promotes RNA polymerase II transcription pause-release, allowing transcription elongation: the PNUTS-PP1 complex mediates the release of RNA polymerase II from promoter-proximal region of genes by catalyzing dephosphorylation of proteins involved in transcription, such as AFF4, CDK9, MEPCE, INTS12, NCBP1, POLR2M/GDOWN1 and SUPT6H. The PNUTS-PP1 complex also regulates transcription termination by mediating dephosphorylation of SUPT5H in termination zones downstream of poly(A) sites, thereby promoting deceleration of RNA polymerase II transcription. PNUTS-PP1 complex is also involved in the response to replication stress by mediating dephosphorylation of POLR2A at 'Ser-5' of the CTD, promoting RNA polymerase II degradation. PNUTS-PP1 also plays a role in the control of chromatin structure and cell cycle progression during the transition from mitosis into interphase. Regulates NEK2 function in terms of kinase activity and centrosome number and splitting, both in the presence and absence of radiation-induced DNA damage. Regulator of neural tube and optic fissure closure, and enteric neural crest cell (ENCCs) migration during development. In balance with CSNK1D and CSNK1E, determines the circadian period length, through the regulation of the speed and rhythmicity of PER1 and PER2 phosphorylation. May dephosphorylate CSNK1D and CSNK1E. Dephosphorylates the 'Ser-418' residue of FOXP3 in regulatory T-cells (Treg) from patients with rheumatoid arthritis, thereby inactivating FOXP3 and rendering Treg cells functionally defective. Dephosphorylates CENPA. Dephosphorylates the 'Ser-139' residue of ATG16L1 causing dissociation of ATG12-ATG5-ATG16L1 complex, thereby inhibiting autophagy. Together with PPP1CC (PP1-gamma subunit), dephosphorylates IFIH1/MDA5 and RIG-I leading to their activation and a functional innate immune response. Core component of the SHOC2-MRAS-PP1c (SMP) holophosphatase complex that regulates the MAPK pathway activation. The SMP complex specifically dephosphorylates the inhibitory phosphorylation at 'Ser-259' of RAF1 kinase, 'Ser-365' of BRAF kinase and 'Ser-214' of ARAF kinase, stimulating their kinase activities. The SMP complex enhances the dephosphorylation activity and substrate specificity of PP1c. This Canis lupus familiaris (Dog) protein is Serine/threonine-protein phosphatase PP1-alpha catalytic subunit (PPP1CA).